A 286-amino-acid chain; its full sequence is Bifunctional protein FolD (286 aa).

NADP(+)-binding positions include 166–168 and Ile-232; that span reads GAS.

This sequence belongs to the tetrahydrofolate dehydrogenase/cyclohydrolase family. In terms of assembly, homodimer.

It catalyses the reaction (6R)-5,10-methylene-5,6,7,8-tetrahydrofolate + NADP(+) = (6R)-5,10-methenyltetrahydrofolate + NADPH. It carries out the reaction (6R)-5,10-methenyltetrahydrofolate + H2O = (6R)-10-formyltetrahydrofolate + H(+). The protein operates within one-carbon metabolism; tetrahydrofolate interconversion. Catalyzes the oxidation of 5,10-methylenetetrahydrofolate to 5,10-methenyltetrahydrofolate and then the hydrolysis of 5,10-methenyltetrahydrofolate to 10-formyltetrahydrofolate. In Shewanella woodyi (strain ATCC 51908 / MS32), this protein is Bifunctional protein FolD.